Consider the following 136-residue polypeptide: Holo-[acyl-carrier-protein] synthase (136 aa).

Mg(2+) contacts are provided by D8 and E57.

The protein belongs to the P-Pant transferase superfamily. AcpS family. The cofactor is Mg(2+).

The protein localises to the cytoplasm. It carries out the reaction apo-[ACP] + CoA = holo-[ACP] + adenosine 3',5'-bisphosphate + H(+). Functionally, transfers the 4'-phosphopantetheine moiety from coenzyme A to a Ser of acyl-carrier-protein. The protein is Holo-[acyl-carrier-protein] synthase of Methylorubrum extorquens (strain PA1) (Methylobacterium extorquens).